Consider the following 131-residue polypeptide: Cytochrome c-552 (131 aa).

Residues Cys11, Cys14, His15, and Met69 each coordinate heme c.

Post-translationally, binds 1 heme c group covalently per subunit.

Its function is as follows. This monoheme basic protein appears to function as an electron donor to cytochrome oxidase in T.thermophilus. This chain is Cytochrome c-552 (cycA), found in Thermus thermophilus.